Reading from the N-terminus, the 636-residue chain is Protein meg-1 (636 aa).

3 stretches are compositionally biased toward polar residues: residues Met-1–Phe-13, Ser-38–Gln-54, and Leu-292–His-355. Disordered stretches follow at residues Met-1–Gln-54, Leu-289–Leu-367, Ser-484–Ile-504, and Leu-521–Ser-542. Ser-574 bears the Phosphoserine; by mbk-2 mark. Residues Met-591–Glu-636 are disordered. The span at Lys-608–Glu-636 shows a compositional bias: basic and acidic residues.

As to quaternary structure, interacts with pptr-1, pptr-2 and pgl-1. Phosphorylated by mbk-2, which promotes the disassembly of zygotic P granules in the anterior cytoplasm of pre-gastrulation embryos. Dephosphorylated by a phosphatase complex containing the PP2A regulatory subunit pptr-1, which promotes the assembly and accumulation of zygotic P granules in the posterior cytoplasm of pre-gastrulation embryos. As to expression, not expressed in the adult germline or in any somatic tissues.

The protein localises to the cytoplasmic granule. Functionally, p granule component, which acts redundantly with P granule component meg-2 to promote P granule segregation during embryogenesis, and germ cell proliferation and differentiation in larval stages. In its phosphorylated form, and together with meg-2, promotes the disassembly of zygotic P granules in the anterior cytoplasm of pre-gastrulation embryos. In its dephosphorylated form, and together with meg-2, promotes the assembly and accumulation of zygotic P granules in the posterior cytoplasm of pre-gastrulation embryos. May function with the nanos family members nos-2 and nos-3 to promote germ cell proliferation during larval development. Required for fertility. This Caenorhabditis elegans protein is Protein meg-1.